Here is a 399-residue protein sequence, read N- to C-terminus: Elongation factor Tu (399 aa).

Positions 10–204 (KPHVNIGTIG…AVDTSIPEPE (195 aa)) constitute a tr-type G domain. The interval 19 to 26 (GHVDHGKT) is G1. Residue 19-26 (GHVDHGKT) coordinates GTP. A Mg(2+)-binding site is contributed by T26. The G2 stretch occupies residues 60–64 (GITIN). The tract at residues 81–84 (DCPG) is G3. GTP is bound by residues 81-85 (DCPGH) and 136-139 (NKCD). Positions 136 to 139 (NKCD) are G4. Residues 174 to 176 (SGL) form a G5 region.

This sequence belongs to the TRAFAC class translation factor GTPase superfamily. Classic translation factor GTPase family. EF-Tu/EF-1A subfamily. As to quaternary structure, monomer.

It localises to the cytoplasm. The catalysed reaction is GTP + H2O = GDP + phosphate + H(+). Its function is as follows. GTP hydrolase that promotes the GTP-dependent binding of aminoacyl-tRNA to the A-site of ribosomes during protein biosynthesis. The polypeptide is Elongation factor Tu (Prochlorococcus marinus (strain MIT 9303)).